The primary structure comprises 364 residues: Anthranilate N-methyltransferase (364 aa).

The segment at 1 to 20 (MGSLSESHTQYKHGVEVEED) is disordered. 4 residues coordinate S-adenosyl-L-methionine: Gly-209, Asp-232, Met-253, and Lys-266. Catalysis depends on His-270, which acts as the Proton acceptor.

The protein belongs to the class I-like SAM-binding methyltransferase superfamily. Cation-independent O-methyltransferase family. COMT subfamily. As to quaternary structure, homodimer. In terms of tissue distribution, expressed in leaves, flowers, stems and roots. Detected in the vascular tissues in stems, in the rhizodermis or the endodermis of roots, in the inside of carpels, in the central vascular bundles of the syncarp ovary and in the secretory oil glands located around the outer ovary wall.

It catalyses the reaction anthranilate + S-adenosyl-L-methionine = N-methylanthranilate + S-adenosyl-L-homocysteine + H(+). Inhibited by Ca(2+), Co(2+), Fe(2+), Fe(3+), Cu(2+) or Zn(2+). No effect of Mg(2+). Functionally, involved in the biosynthesis of acridine alkaloids. N-methyltransferase with a strict substrate specificity for anthranilate. No activity with anthranilic acid methyl ester, anthraniloyl CoA, 3- or 4-amino-benzoic acid, salicylic acid, catechol, eugenol, caffeic acid, quercetin, theobromin, theophyllin, putrescine and nicotinic acid among others. The sequence is that of Anthranilate N-methyltransferase from Ruta graveolens (Common rue).